A 353-amino-acid polypeptide reads, in one-letter code: MNGTEGPYFYIPMVNTTGIVRSPYEYPQYYLVNPAAYAALGAYMFLLILVGFPINFLTLYVTIEHKKLRTPLNYILLNLAVANLFMVFGGFTTTMYTSMHGYFVLGRLGCNLEGFFATLGGEIALWSLVVLAIERWMVVCKPISNFRFGEDHAIMGLAFTWVMAAACAVPPLVGWSRYIPEGMQCSCGIDYYTRAEGFNNESFVIYMFVCHFLIPLVVVFFCYGRLLCAVKEAAAAQQESETTQRAEREVSRMVVIMVVAFLICWCPYAGVAWYIFTHQGSEFGPLFMTFPAFFAKSSSIYNPMIYICMNKQFRHCMITTLCCGKNPFEEEEGASTTSKTEASSVSSSSVSPA.

Topologically, residues 1-36 (MNGTEGPYFYIPMVNTTGIVRSPYEYPQYYLVNPAA) are extracellular. N-linked (GlcNAc...) asparagine glycosylation is found at N2 and N15. Residues 37 to 61 (YAALGAYMFLLILVGFPINFLTLYV) traverse the membrane as a helical segment. At 62–73 (TIEHKKLRTPLN) the chain is on the cytoplasmic side. Residues 74 to 96 (YILLNLAVANLFMVFGGFTTTMY) form a helical membrane-spanning segment. The Extracellular segment spans residues 97 to 110 (TSMHGYFVLGRLGC). C110 and C187 form a disulfide bridge. Residues 111-133 (NLEGFFATLGGEIALWSLVVLAI) form a helical membrane-spanning segment. Positions 134–136 (ERW) match the 'Ionic lock' involved in activated form stabilization motif. The Cytoplasmic segment spans residues 134–152 (ERWMVVCKPISNFRFGEDH). A helical membrane pass occupies residues 153 to 173 (AIMGLAFTWVMAAACAVPPLV). Topologically, residues 174 to 202 (GWSRYIPEGMQCSCGIDYYTRAEGFNNES) are extracellular. The N-linked (GlcNAc...) asparagine glycan is linked to N200. The chain crosses the membrane as a helical span at residues 203–224 (FVIYMFVCHFLIPLVVVFFCYG). Residues 225–252 (RLLCAVKEAAAAQQESETTQRAEREVSR) are Cytoplasmic-facing. Residues 253–274 (MVVIMVVAFLICWCPYAGVAWY) form a helical membrane-spanning segment. Residues 275-286 (IFTHQGSEFGPL) are Extracellular-facing. A helical membrane pass occupies residues 287-308 (FMTFPAFFAKSSSIYNPMIYIC). Position 296 is an N6-(retinylidene)lysine (K296). Residues 309–353 (MNKQFRHCMITTLCCGKNPFEEEEGASTTSKTEASSVSSSSVSPA) are Cytoplasmic-facing. Residues C322 and C323 are each lipidated (S-palmitoyl cysteine). The segment at 330-353 (EEEGASTTSKTEASSVSSSSVSPA) is disordered. Residues 334-353 (ASTTSKTEASSVSSSSVSPA) are compositionally biased toward low complexity.

Belongs to the G-protein coupled receptor 1 family. Opsin subfamily. In terms of processing, phosphorylated on some or all of the serine and threonine residues present in the C-terminal region. Post-translationally, contains one covalently linked retinal chromophore.

The protein localises to the membrane. It is found in the cell projection. Its subcellular location is the cilium. It localises to the photoreceptor outer segment. Functionally, photoreceptor required for image-forming vision at low light intensity. While most salt water fish species use retinal as chromophore, most freshwater fish use 3-dehydroretinal, or a mixture of retinal and 3-dehydroretinal. Light-induced isomerization of 11-cis to all-trans retinal triggers a conformational change that activates signaling via G-proteins. Subsequent receptor phosphorylation mediates displacement of the bound G-protein alpha subunit by arrestin and terminates signaling. The sequence is that of Rhodopsin (rho) from Chelon saliens (Leaping mullet).